The sequence spans 138 residues: Putative nickel-responsive regulator (138 aa).

Positions 80, 91, 93, and 99 each coordinate Ni(2+).

This sequence belongs to the transcriptional regulatory CopG/NikR family. Ni(2+) serves as cofactor.

Functionally, transcriptional regulator. This is Putative nickel-responsive regulator from Campylobacter hominis (strain ATCC BAA-381 / DSM 21671 / CCUG 45161 / LMG 19568 / NCTC 13146 / CH001A).